Here is a 304-residue protein sequence, read N- to C-terminus: MASNIKIVFFGTGGSWPTPIRAMPGVGIQIDDVFNLFDCGEGTQKQIMKSKWSFMSIDNIFITHFHGDHFLGLIGLVQSMSFNNRTKDLNIFGPRGAIGIISNAINIGYYTLRFRINVYELEPDKTYDLGKFLLKTTLNDHPVPALSYTIEEKDIIRVDPQKAKELGIPSKIIEKIRDNGTYEYRGRKYSIDEISGGIRKGRKIVYTGDTKPMQKMADFAKHADVLIHDTTTDSSFEPAVNQFGHSSAKQAARIARDAGVSRLFLYHYSPRITDVSPLVDDARAEFQESYASEDLMEYEVKVKH.

Residues H64, H66, D68, H69, H141, D209, and H267 each contribute to the Zn(2+) site. Residue D68 is the Proton acceptor of the active site.

This sequence belongs to the RNase Z family. In terms of assembly, homodimer. It depends on Zn(2+) as a cofactor.

The catalysed reaction is Endonucleolytic cleavage of RNA, removing extra 3' nucleotides from tRNA precursor, generating 3' termini of tRNAs. A 3'-hydroxy group is left at the tRNA terminus and a 5'-phosphoryl group is left at the trailer molecule.. In terms of biological role, zinc phosphodiesterase, which displays some tRNA 3'-processing endonuclease activity. Probably involved in tRNA maturation, by removing a 3'-trailer from precursor tRNA. In Thermoplasma volcanium (strain ATCC 51530 / DSM 4299 / JCM 9571 / NBRC 15438 / GSS1), this protein is Ribonuclease Z.